A 442-amino-acid chain; its full sequence is MFS transporter asaE (442 aa).

Polar residues predominate over residues 1 to 10 (MDRSRTSSQG). Residues 1 to 43 (MDRSRTSSQGRDVLPPRGDEGRISPSLDKEKSPGPEDQPDAPP) form a disordered region. The segment covering 17 to 34 (RGDEGRISPSLDKEKSPG) has biased composition (basic and acidic residues). 12 helical membrane-spanning segments follow: residues 47 to 67 (LTAW…FGWV), 89 to 109 (TISW…PIVG), 119 to 139 (YLII…SIST), 150 to 170 (ICSA…VSAW), 177 to 197 (IAFA…PIMV), 206 to 226 (FGWS…IAIV), 252 to 272 (PVFI…FIPI), 288 to 307 (LASY…RLGA), 319 to 339 (IFIV…IPAT), 342 to 362 (APII…VSLS), 381 to 401 (LLFL…GAIL), and 413 to 433 (IFSG…RIVG).

Belongs to the major facilitator superfamily. Monocarboxylate porter (TC 2.A.1.13) family.

It localises to the cell membrane. Its pathway is secondary metabolite biosynthesis. In terms of biological role, MFS transporter; part of the gene cluster that mediates the biosynthesis of aspergillic acid. Probably involved in aspergillic acid metabolism and transport. This Aspergillus flavus (strain ATCC 200026 / FGSC A1120 / IAM 13836 / NRRL 3357 / JCM 12722 / SRRC 167) protein is MFS transporter asaE.